Here is an 837-residue protein sequence, read N- to C-terminus: Tuftelin-interacting protein 11 (837 aa).

2 stretches are compositionally biased toward basic and acidic residues: residues 1-13 and 53-64; these read MSLS…GEGR and VWAERDSDDERP. Disordered stretches follow at residues 1-21, 53-72, and 85-133; these read MSLS…DDER, VWAE…KRAR, and LKKG…KGFA. The required for interaction with DHX15 stretch occupies residues 1 to 50; sequence MSLSHLYRDGEGRIDDDDDERENFEITDWDLQNEFNPNRQRHWQTKEEAT. Ser2, Ser59, and Ser98 each carry phosphoserine. Residues 91-102 are compositionally biased toward acidic residues; that stretch reads EEAELEDSDDEE. A compositionally biased stretch (basic and acidic residues) spans 103-116; that stretch reads KPVKQDDFPKDFGP. Phosphoserine is present on Ser144. One can recognise a G-patch domain in the interval 149 to 195; that stretch reads TKGIGQKLLQKMGYVPGRGLGKNAQGIINPIEAKQRKGKGAVGAYGS. A disordered region spans residues 179–236; the sequence is IEAKQRKGKGAVGAYGSERTTQSMQDFPVVDSEEEAEEEFQKELSQWRKDPSGSKKKP. Ser210 bears the Phosphoserine mark. Over residues 217 to 231 the composition is skewed to basic and acidic residues; the sequence is EFQKELSQWRKDPSG. Positions 700–705 match the Nuclear localization signal motif; sequence VKDKFN. The tract at residues 710-734 is required for nuclear speckle localization; sequence IMNRAVSSNVGAYMQPGARENIAYL.

It belongs to the TFP11/STIP family. Identified in the spliceosome C complex. Found in the Intron Large (IL) complex, a post-mRNA release spliceosomal complex containing the excised intron, U2, U5 and U6 snRNPs, and splicing factors. Interacts with TUFT1. Interacts with DHX15; indicative for a recruitment of DHX15 to the IL complex. Interacts with GCFC2.

Its subcellular location is the cytoplasm. It localises to the nucleus. Involved in pre-mRNA splicing, specifically in spliceosome disassembly during late-stage splicing events. Intron turnover seems to proceed through reactions in two lariat-intron associated complexes termed Intron Large (IL) and Intron Small (IS). In cooperation with DHX15 seems to mediate the transition of the U2, U5 and U6 snRNP-containing IL complex to the snRNP-free IS complex leading to efficient debranching and turnover of excised introns. May play a role in the differentiation of ameloblasts and odontoblasts or in the forming of the enamel extracellular matrix. This is Tuftelin-interacting protein 11 (TFIP11) from Pongo abelii (Sumatran orangutan).